We begin with the raw amino-acid sequence, 732 residues long: Adducin-related protein 1 (732 aa).

Disordered regions lie at residues 1–22 and 684–732; these read MIGR…DPEY and TRFS…KKDK. The segment covering 685-705 has biased composition (polar residues); sequence RFSSTQGTSEGNTTSRSCTTA. The span at 716–732 shows a compositional bias: basic residues; it reads KKKKKKGFLSFMRKKDK.

It belongs to the aldolase class II family. Adducin subfamily.

It localises to the cytoplasm. It is found in the cytoskeleton. Its subcellular location is the cell membrane. Its function is as follows. Membrane-cytoskeleton-associated protein that promotes the assembly of the spectrin-actin network. Plays a role in time-dependent memmory loss and the retention of conditioned behavior over time. The protein is Adducin-related protein 1 of Caenorhabditis elegans.